We begin with the raw amino-acid sequence, 557 residues long: Hepatocyte nuclear factor 1-beta (557 aa).

The dimerization stretch occupies residues 1–31 (MVSKLTSLQQELLSALLSSGVTKEVLVQALE). Positions 1-32 (MVSKLTSLQQELLSALLSSGVTKEVLVQALEE) constitute an HNF-p1 domain. 4 positions are modified to phosphoserine: S49, S52, S75, and S80. A disordered region spans residues 64–85 (TLTNGHAKGRLSGDEGSEDGDD). Residues 93 to 188 (KELQALNTEE…ILRQFNQTVQ (96 aa)) form the POU-specific atypical domain. Positions 231–311 (MRRNRFKWGP…NRRKEEAFRQ (81 aa)) form a DNA-binding region, homeobox; HNF1-type. The tract at residues 324-370 (HSLNPLLSHGSPHHQPSSSPPNKLSGVRYSQQGNNEVTSSSTISHHG) is disordered. Over residues 328–344 (PLLSHGSPHHQPSSSPP) the composition is skewed to low complexity. A compositionally biased stretch (polar residues) spans 351–370 (RYSQQGNNEVTSSSTISHHG).

This sequence belongs to the HNF1 homeobox family. In terms of assembly, binds DNA as a dimer. Can form homodimer or heterodimer with HNF1-alpha. Interacts (via HNF-p1 domain) with PCBD1; the interaction increases its transactivation activity.

The protein resides in the nucleus. Transcription factor that binds to the inverted palindrome 5'-GTTAATNATTAAC-3'. Binds to the FPC element in the cAMP regulatory unit of the PLAU gene. Transcriptional activity is increased by coactivator PCBD1. This chain is Hepatocyte nuclear factor 1-beta (HNF1B), found in Pongo abelii (Sumatran orangutan).